The following is a 90-amino-acid chain: Accessory gland-specific peptide 26Ab (90 aa).

The first 21 residues, 1 to 21 (MNYFAVLCIFSCICLWQFSDA), serve as a signal peptide directing secretion.

In terms of tissue distribution, main cells of the accessory glands of males.

The protein localises to the secreted. It localises to the extracellular space. In terms of biological role, this protein is transferred from male to female during mating and may affect egglaying and behavior after mating. The polypeptide is Accessory gland-specific peptide 26Ab (Acp26Ab) (Drosophila mauritiana (Fruit fly)).